A 442-amino-acid chain; its full sequence is MSGLAYLDLPAARLARGEVALPGSKSISNRVLLLAALAEGSTEITGLLDSDDTRVMLAALRQLGVSVGEVADGCVTIEGVARFPTEQAELFLGNAGTAFRPLTAALALMGGDYRLSGVPRMHERPIGDLVDALRQFGAGIEYLGQAGYPPLRIGGGSIRVDGPVRVEGSVSSQFLTALLMAAPVLARRSGQDITIEVVGELISKPYIEITLNLMARFGVSVRRDGWRAFTIARDAVYRGPGRMAIEGDASTASYFLALGAIGGGPVRVTGVGEDSIQGDVAFAATLAAMGADVRYGPGWIETRGVRVAEGGRLKAFDADFNLIPDAAMTAATLALYADGPCRLRNIGSWRVKETDRIHAMHTELEKLGAGVQSGADWLEVAPPEPGGWRDAHIGTWDDHRMAMCFSLAAFGPAAVRILDPGCVSKTFPDYFDVYAGLLAARD.

3 residues coordinate 3-phosphoshikimate: lysine 25, serine 26, and arginine 30. Lysine 25 serves as a coordination point for phosphoenolpyruvate. Residues glycine 96 and arginine 124 each coordinate phosphoenolpyruvate. The 3-phosphoshikimate site is built by serine 171, serine 172, glutamine 173, serine 203, aspartate 325, and lysine 352. Glutamine 173 contacts phosphoenolpyruvate. Residue aspartate 325 is the Proton acceptor of the active site. Positions 356, 400, and 425 each coordinate phosphoenolpyruvate.

Belongs to the EPSP synthase family. As to quaternary structure, monomer.

The protein localises to the cytoplasm. The catalysed reaction is 3-phosphoshikimate + phosphoenolpyruvate = 5-O-(1-carboxyvinyl)-3-phosphoshikimate + phosphate. It participates in metabolic intermediate biosynthesis; chorismate biosynthesis; chorismate from D-erythrose 4-phosphate and phosphoenolpyruvate: step 6/7. In terms of biological role, catalyzes the transfer of the enolpyruvyl moiety of phosphoenolpyruvate (PEP) to the 5-hydroxyl of shikimate-3-phosphate (S3P) to produce enolpyruvyl shikimate-3-phosphate and inorganic phosphate. This Bordetella pertussis (strain Tohama I / ATCC BAA-589 / NCTC 13251) protein is 3-phosphoshikimate 1-carboxyvinyltransferase.